Here is a 165-residue protein sequence, read N- to C-terminus: Group 10 secretory phospholipase A2 (165 aa).

An N-terminal signal peptide occupies residues 1–31; sequence MGPLPVCLPIMLLLLLPSLLLLLLLPGPGSG. Residues 32–42 constitute a propeptide that is removed on maturation; sequence EASRILRVHRR. 8 disulfides stabilise this stretch: C53-C111, C67-C157, C69-C85, C84-C139, C90-C164, C91-C132, C100-C125, and C118-C130. Residues F68, G70, and G72 each coordinate Ca(2+). Residue H88 is part of the active site. D89 lines the Ca(2+) pocket. An N-linked (GlcNAc...) asparagine glycan is attached at N113. D133 is an active-site residue.

Belongs to the phospholipase A2 family. In terms of assembly, interacts with PLA2R1; this interaction mediates PLA2G10 clearance and inactivation. Requires Ca(2+) as cofactor. Found in spleen, thymus, peripheral blood leukocytes, pancreas, lung, and colon. Expressed in neuronal fibers in dorsal root ganglia and in peripheral tissues including stomach, white adipose tissue and prostate (at protein level).

It is found in the secreted. Its subcellular location is the lysosome. It localises to the cytoplasmic vesicle. The protein resides in the secretory vesicle. The protein localises to the acrosome. The catalysed reaction is a 1,2-diacyl-sn-glycero-3-phosphocholine + H2O = a 1-acyl-sn-glycero-3-phosphocholine + a fatty acid + H(+). It carries out the reaction 1-hexadecanoyl-2-(9Z-octadecenoyl)-sn-glycero-3-phosphocholine + H2O = 1-hexadecanoyl-sn-glycero-3-phosphocholine + (9Z)-octadecenoate + H(+). It catalyses the reaction 1-octadecanoyl-2-(5Z,8Z,11Z,14Z-eicosatetraenoyl)-sn-glycero-3-phosphocholine + H2O = 1-octadecanoyl-sn-glycero-3-phosphocholine + (5Z,8Z,11Z,14Z)-eicosatetraenoate + H(+). The enzyme catalyses 1,2-dihexadecanoyl-sn-glycero-3-phosphocholine + H2O = 1-hexadecanoyl-sn-glycero-3-phosphocholine + hexadecanoate + H(+). The catalysed reaction is 1-hexadecanoyl-2-(9Z-octadecenoyl)-sn-glycero-3-phosphoglycerol + H2O = 1-hexadecanoyl-sn-glycero-3-phosphoglycerol + (9Z)-octadecenoate + H(+). It carries out the reaction 1,2-dihexadecanoyl-sn-glycero-3-phospho-(1'-sn-glycerol) + H2O = 1-hexadecanoyl-sn-glycero-3-phospho-(1'-sn-glycerol) + hexadecanoate + H(+). It catalyses the reaction 1-hexadecanoyl-2-(9Z-octadecenoyl)-sn-glycero-3-phospho-L-serine + H2O = 1-hexadecanoyl-sn-glycero-3-phospho-L-serine + (9Z)-octadecenoate + H(+). The enzyme catalyses 1-hexadecanoyl-2-(9Z,12Z-octadecadienoyl)-sn-glycero-3-phosphoethanolamine + H2O = 1-hexadecanoyl-sn-glycero-3-phosphoethanolamine + (9Z,12Z)-octadecadienoate + H(+). The catalysed reaction is 1-hexadecanoyl-2-(9Z-octadecenoyl)-sn-glycero-3-phosphate + H2O = 1-hexadecanoyl-sn-glycero-3-phosphate + (9Z)-octadecenoate + H(+). It carries out the reaction 1-O-hexadecyl-2-acetyl-sn-glycero-3-phosphocholine + H2O = 1-O-hexadecyl-sn-glycero-3-phosphocholine + acetate + H(+). Its activity is regulated as follows. Inhibited by methyl indoxam. Its function is as follows. Secretory calcium-dependent phospholipase A2 that primarily targets extracellular phospholipids. Hydrolyzes the ester bond of the fatty acyl group attached at sn-2 position of phospholipids with preference for phosphatidylcholines and phosphatidylglycerols over phosphatidylethanolamines. Preferentially releases sn-2 omega-6 and omega-3 polyunsaturated fatty acyl (PUFA) chains over saturated fatty acyls. Contributes to phospholipid remodeling of very low-density lipoprotein (VLDL), low-density lipoprotein (LDL) and high-density lipoprotein (HDL) particles. Hydrolyzes LDL phospholipids releasing unsaturated fatty acids that regulate macrophage differentiation toward foam cells. Efficiently hydrolyzes and inactivates platelet activating factor (PAF), a potent lipid mediator present in oxidized LDL. May act in an autocrine and paracrine manner. Secreted by lung epithelium, targets membrane phospholipids of infiltrating eosinophils, releasing arachidonate and boosting eicosanoid and cysteinyl leukotriene synthesis involved in airway inflammatory response. Secreted by gut epithelium, hydrolyzes dietary and biliary phosphatidylcholines in the gastrointestinal lumen. Plays a stem cell regulator role in colon epithelium. Within intracellular compartment, mediates Paneth-like cell differentiation and its stem cell supporting functions by inhibiting the Wnt signaling pathway in intestinal stem cell (ISC). Secreted in the intestinal lumen upon inflammation, acts in an autocrine way and promotes prostaglandin E2 synthesis that stimulates Wnt signaling pathway in ISCs and tissue regeneration. May participate in hair follicle morphogenesis by regulating phosphatidylethanolamines metabolism at the outermost epithelial layer and facilitating melanin synthesis. By releasing lysophosphatidylcholines (LPCs) at sperm acrosome, controls sperm cell capacitation, acrosome reaction and overall fertility. May promote neurite outgrowth in neuron fibers involved in nociception. Contributes to lipid remodeling of cellular membranes and generation of lipid mediators involved in pathogen clearance. Cleaves sn-2 fatty acyl chains of phosphatidylglycerols and phosphatidylethanolamines, which are major components of membrane phospholipids in bacteria. Displays bactericidal activity against Gram-positive bacteria by directly hydrolyzing phospholipids of the bacterial membrane. In pulmonary epithelium, may contribute to host defense response against adenoviral infection. Prevents adenovirus entry into host cells by hydrolyzing host cell plasma membrane, releasing C16:0 LPCs that inhibit virus-mediated membrane fusion and viral infection. Likely prevents adenoviral entry into the endosomes of host cells. May play a role in maturation and activation of innate immune cells including macrophages, group 2 innate lymphoid cells and mast cells. This is Group 10 secretory phospholipase A2 (PLA2G10) from Homo sapiens (Human).